The sequence spans 189 residues: Protein jagunal homolog (189 aa).

Residues 1–34 (MSSRGVRAAGTDGTDFQNRQRVAQHYQESAQYKS) lie on the Cytoplasmic side of the membrane. The chain crosses the membrane as a helical span at residues 35 to 55 (ILKWFFVPHFLILVFMWLKVG). Topologically, residues 56–78 (SELLRTNFGWKNAFFDRLDMPSA) are lumenal. A helical membrane pass occupies residues 79–99 (YPWEYVWCFSFIPIVLAIYSF). The Cytoplasmic portion of the chain corresponds to 100–105 (QRNKLK). The chain crosses the membrane as a helical span at residues 106–126 (ILHYAYYAEFVVGIFPCMIGL). Residues 127–150 (GGQLPELMEYAQDMEGSNTPTFKG) lie on the Lumenal side of the membrane. Residues 151-171 (IFPMVIIWYIFFAVALQIHGF) traverse the membrane as a helical segment. Residues 172–189 (SMYFMHHLAAAWAPVKRD) lie on the Cytoplasmic side of the membrane.

It belongs to the jagunal family.

The protein resides in the endoplasmic reticulum membrane. This chain is Protein jagunal homolog, found in Caenorhabditis elegans.